Reading from the N-terminus, the 126-residue chain is Aspartate 1-decarboxylase (126 aa).

Residue Ser25 is the Schiff-base intermediate with substrate; via pyruvic acid of the active site. Ser25 bears the Pyruvic acid (Ser) mark. Thr57 contributes to the substrate binding site. Catalysis depends on Tyr58, which acts as the Proton donor. 73-75 is a binding site for substrate; that stretch reads GAA.

The protein belongs to the PanD family. As to quaternary structure, heterooctamer of four alpha and four beta subunits. Pyruvate is required as a cofactor. Is synthesized initially as an inactive proenzyme, which is activated by self-cleavage at a specific serine bond to produce a beta-subunit with a hydroxyl group at its C-terminus and an alpha-subunit with a pyruvoyl group at its N-terminus.

Its subcellular location is the cytoplasm. It catalyses the reaction L-aspartate + H(+) = beta-alanine + CO2. Its pathway is cofactor biosynthesis; (R)-pantothenate biosynthesis; beta-alanine from L-aspartate: step 1/1. Functionally, catalyzes the pyruvoyl-dependent decarboxylation of aspartate to produce beta-alanine. This chain is Aspartate 1-decarboxylase, found in Citrobacter koseri (strain ATCC BAA-895 / CDC 4225-83 / SGSC4696).